We begin with the raw amino-acid sequence, 355 residues long: UDP-N-acetylglucosamine--N-acetylmuramyl-(pentapeptide) pyrophosphoryl-undecaprenol N-acetylglucosamine transferase (355 aa).

Residues 14–16, N123, R164, S190, and Q284 each bind UDP-N-acetyl-alpha-D-glucosamine; that span reads TGG.

Belongs to the glycosyltransferase 28 family. MurG subfamily.

It localises to the cell inner membrane. The enzyme catalyses di-trans,octa-cis-undecaprenyl diphospho-N-acetyl-alpha-D-muramoyl-L-alanyl-D-glutamyl-meso-2,6-diaminopimeloyl-D-alanyl-D-alanine + UDP-N-acetyl-alpha-D-glucosamine = di-trans,octa-cis-undecaprenyl diphospho-[N-acetyl-alpha-D-glucosaminyl-(1-&gt;4)]-N-acetyl-alpha-D-muramoyl-L-alanyl-D-glutamyl-meso-2,6-diaminopimeloyl-D-alanyl-D-alanine + UDP + H(+). Its pathway is cell wall biogenesis; peptidoglycan biosynthesis. In terms of biological role, cell wall formation. Catalyzes the transfer of a GlcNAc subunit on undecaprenyl-pyrophosphoryl-MurNAc-pentapeptide (lipid intermediate I) to form undecaprenyl-pyrophosphoryl-MurNAc-(pentapeptide)GlcNAc (lipid intermediate II). The sequence is that of UDP-N-acetylglucosamine--N-acetylmuramyl-(pentapeptide) pyrophosphoryl-undecaprenol N-acetylglucosamine transferase from Synechocystis sp. (strain ATCC 27184 / PCC 6803 / Kazusa).